We begin with the raw amino-acid sequence, 604 residues long: Envelope glycoprotein E (604 aa).

The N-terminal stretch at Met-1–Ile-24 is a signal peptide. Residues Asn-25 to Gly-526 lie on the Virion surface side of the membrane. N-linked (GlcNAc...) asparagine; by host glycosylation occurs at Asn-117. Residues Cys-192–Cys-219 form an interaction with gI region. Asn-249 and Asn-303 each carry an N-linked (GlcNAc...) asparagine; by host glycan. 3 disulfide bridges follow: Cys-370-Cys-396, Cys-379-Cys-388, and Cys-415-Cys-424. N-linked (GlcNAc...) asparagine; by host glycans are attached at residues Asn-419 and Asn-505. The helical transmembrane segment at Ile-527 to Val-544 threads the bilayer. The Intravirion segment spans residues Cys-545 to Arg-604. The Internalization motif motif lies at Tyr-568–Val-571. The interval Asp-574 to Glu-586 is acidic.

The protein belongs to the alphaherpesvirinae glycoprotein E family. As to quaternary structure, interacts with gI. In terms of processing, phosphorylated within the acidic cluster. Phosphorylation determines whether endocytosed viral gE traffics to the trans-Golgi network or recycles to the cell membrane.

Its subcellular location is the virion membrane. It is found in the host cell membrane. The protein localises to the host cell junction. It localises to the host Golgi apparatus membrane. The protein resides in the host endosome membrane. Its function is as follows. In epithelial cells, the heterodimer gE/gI is required for the cell-to-cell spread of the virus, by sorting nascent virions to cell junctions. Once the virus reaches the cell junctions, virus particles can spread to adjacent cells extremely rapidly through interactions with cellular receptors that accumulate at these junctions. Implicated in basolateral spread in polarized cells. In neuronal cells, gE/gI is essential for the anterograde spread of the infection throughout the host nervous system. Together with US9, the heterodimer gE/gI is involved in the sorting and transport of viral structural components toward axon tips. In Cercopithecine herpesvirus 9 (strain DHV) (CeHV-9), this protein is Envelope glycoprotein E (gE).